Reading from the N-terminus, the 82-residue chain is Large ribosomal subunit protein bL27 (82 aa).

Residues 1 to 21 (MAHKKGASSSRNGRDSNAKRL) are disordered.

This sequence belongs to the bacterial ribosomal protein bL27 family.

The protein is Large ribosomal subunit protein bL27 of Tropheryma whipplei (strain Twist) (Whipple's bacillus).